We begin with the raw amino-acid sequence, 872 residues long: Alanine--tRNA ligase (872 aa).

Zn(2+) is bound by residues histidine 567, histidine 571, cysteine 669, and histidine 673.

This sequence belongs to the class-II aminoacyl-tRNA synthetase family. The cofactor is Zn(2+).

It is found in the cytoplasm. The catalysed reaction is tRNA(Ala) + L-alanine + ATP = L-alanyl-tRNA(Ala) + AMP + diphosphate. Its function is as follows. Catalyzes the attachment of alanine to tRNA(Ala) in a two-step reaction: alanine is first activated by ATP to form Ala-AMP and then transferred to the acceptor end of tRNA(Ala). Also edits incorrectly charged Ser-tRNA(Ala) and Gly-tRNA(Ala) via its editing domain. The polypeptide is Alanine--tRNA ligase (Streptococcus pyogenes serotype M2 (strain MGAS10270)).